The following is a 164-amino-acid chain: Peptidyl-prolyl cis-trans isomerase A-like 4G (164 aa).

The 157-residue stretch at 7-163 folds into the PPIase cyclophilin-type domain; that stretch reads FFDITVDGKP…KKITIADCGQ (157 aa).

It belongs to the cyclophilin-type PPIase family. PPIase A subfamily.

The protein resides in the cytoplasm. The enzyme catalyses [protein]-peptidylproline (omega=180) = [protein]-peptidylproline (omega=0). Its function is as follows. PPIases accelerate the folding of proteins. It catalyzes the cis-trans isomerization of proline imidic peptide bonds in oligopeptides. The sequence is that of Peptidyl-prolyl cis-trans isomerase A-like 4G (PPIAL4G) from Homo sapiens (Human).